We begin with the raw amino-acid sequence, 37 residues long: Large ribosomal subunit protein bL36 (37 aa).

The protein belongs to the bacterial ribosomal protein bL36 family.

This is Large ribosomal subunit protein bL36 from Photobacterium profundum (strain SS9).